The primary structure comprises 314 residues: Probable 5-dehydro-4-deoxyglucarate dehydratase (314 aa).

Belongs to the DapA family.

It catalyses the reaction 5-dehydro-4-deoxy-D-glucarate + H(+) = 2,5-dioxopentanoate + CO2 + H2O. It functions in the pathway carbohydrate acid metabolism; D-glucarate degradation; 2,5-dioxopentanoate from D-glucarate: step 2/2. In Bradyrhizobium diazoefficiens (strain JCM 10833 / BCRC 13528 / IAM 13628 / NBRC 14792 / USDA 110), this protein is Probable 5-dehydro-4-deoxyglucarate dehydratase.